The following is a 310-amino-acid chain: MAQKPVDYVTQIIGNTPVVKLRNVVDDDAADIYVKLEYQNPGGSVKDRIALAMIEKAEREGKIKPGDTIVEPTSGNTGIGLAFVCAAKGYKAVFTMPETMSQERRNLLKAYGAELVLTPGSEAMKGAIKKAKELKEEHGYFEPQQFENPANPEIHELTTGPELVEQFEGRQIDAFLAGVGTGGTLSGVGKVLKKEYPNVEIVAIEPEASPVLSGGEPGPHKLQGLGAGFVPDTLNTEVYDSIIKVGNDTAMDMARRVAREEGILAGISSGAAIYAAIQKAKELGKGKTVVTVLPSNGERYLSTPLYSFDN.

An N6-(pyridoxal phosphate)lysine modification is found at K46. Pyridoxal 5'-phosphate contacts are provided by residues N76, 180–184 (GTGGT), and S268.

This sequence belongs to the cysteine synthase/cystathionine beta-synthase family. Homodimer. Pyridoxal 5'-phosphate serves as cofactor.

The catalysed reaction is O-acetyl-L-serine + hydrogen sulfide = L-cysteine + acetate. It participates in amino-acid biosynthesis; L-cysteine biosynthesis; L-cysteine from L-serine: step 2/2. The sequence is that of Cysteine synthase (cysK) from Staphylococcus epidermidis (strain ATCC 35984 / DSM 28319 / BCRC 17069 / CCUG 31568 / BM 3577 / RP62A).